Here is a 393-residue protein sequence, read N- to C-terminus: Major outer membrane protein P.IA (393 aa).

Positions 1 to 19 are cleaved as a signal peptide; that stretch reads MRKKLTALVLSALPLAAVA.

The protein belongs to the Gram-negative porin family. Homotrimer.

The protein resides in the cell outer membrane. In terms of biological role, serves as a slightly cation selective porin. Major antigen on the gonococcal cell surface and it may have pathogenic properties in addition to its porin activity. This Neisseria meningitidis serogroup C protein is Major outer membrane protein P.IA (porA).